We begin with the raw amino-acid sequence, 61 residues long: Large ribosomal subunit protein uL30 (61 aa).

This sequence belongs to the universal ribosomal protein uL30 family. In terms of assembly, part of the 50S ribosomal subunit.

The polypeptide is Large ribosomal subunit protein uL30 (Lactobacillus acidophilus (strain ATCC 700396 / NCK56 / N2 / NCFM)).